The chain runs to 263 residues: tRNA pseudouridine synthase A (263 aa).

Aspartate 54 functions as the Nucleophile in the catalytic mechanism. Tyrosine 113 is a substrate binding site.

The protein belongs to the tRNA pseudouridine synthase TruA family. Homodimer.

It catalyses the reaction uridine(38/39/40) in tRNA = pseudouridine(38/39/40) in tRNA. Formation of pseudouridine at positions 38, 39 and 40 in the anticodon stem and loop of transfer RNAs. The chain is tRNA pseudouridine synthase A from Lactobacillus helveticus (strain DPC 4571).